Consider the following 329-residue polypeptide: D-alanine--D-alanine ligase (329 aa).

The ATP-grasp domain occupies 121–327; that stretch reads KLWYDALDIP…FSEFLAQCVT (207 aa). ATP is bound at residue 151 to 206; that stretch reads AFGHWGSIFVKAARQGSSVGCYKVTTEDQIAPAIEAAFGFSEQVLVEQAVKPRELE. Positions 281, 294, and 296 each coordinate Mg(2+).

The protein belongs to the D-alanine--D-alanine ligase family. It depends on Mg(2+) as a cofactor. Mn(2+) serves as cofactor.

The protein localises to the cytoplasm. The enzyme catalyses 2 D-alanine + ATP = D-alanyl-D-alanine + ADP + phosphate + H(+). Its pathway is cell wall biogenesis; peptidoglycan biosynthesis. Functionally, cell wall formation. The protein is D-alanine--D-alanine ligase of Vibrio cholerae serotype O1 (strain ATCC 39541 / Classical Ogawa 395 / O395).